The sequence spans 338 residues: Nickel transporter NixA (338 aa).

Helical transmembrane passes span 11–31 (WLPY…FLWI), 37–57 (HILF…AFDA), 79–99 (GVGF…AVFL), 127–147 (FFLV…INLF), 187–207 (VLPL…IALL), 217–237 (AISF…MSLL), 266–286 (ITAI…LQIL), and 307–327 (YLGY…SLIW).

It belongs to the NiCoT transporter (TC 2.A.52) family.

The protein resides in the cell membrane. Functionally, secondary nickel transporter. Required for full urease activity. The polypeptide is Nickel transporter NixA (Staphylococcus aureus (strain NCTC 8325 / PS 47)).